The sequence spans 508 residues: Photosystem II CP47 reaction center protein (508 aa).

The next 6 membrane-spanning stretches (helical) occupy residues 21 to 36 (SVHIMHTALVSGWAGS), 101 to 115 (IVFSGLCFLAAIWHW), 140 to 156 (GIHLFLSGLACFGFGAF), 203 to 218 (IAAGTLGILAGLFHLS), 237 to 252 (VLSSSIAAVFFAAFVV), and 457 to 472 (SFALLFFFGHIWHGAR).

This sequence belongs to the PsbB/PsbC family. PsbB subfamily. In terms of assembly, PSII is composed of 1 copy each of membrane proteins PsbA, PsbB, PsbC, PsbD, PsbE, PsbF, PsbH, PsbI, PsbJ, PsbK, PsbL, PsbM, PsbT, PsbX, PsbY, PsbZ, Psb30/Ycf12, at least 3 peripheral proteins of the oxygen-evolving complex and a large number of cofactors. It forms dimeric complexes. Binds multiple chlorophylls. PSII binds additional chlorophylls, carotenoids and specific lipids. is required as a cofactor.

The protein localises to the plastid. It localises to the chloroplast thylakoid membrane. In terms of biological role, one of the components of the core complex of photosystem II (PSII). It binds chlorophyll and helps catalyze the primary light-induced photochemical processes of PSII. PSII is a light-driven water:plastoquinone oxidoreductase, using light energy to abstract electrons from H(2)O, generating O(2) and a proton gradient subsequently used for ATP formation. This Dioscorea elephantipes (Elephant's foot yam) protein is Photosystem II CP47 reaction center protein.